Reading from the N-terminus, the 114-residue chain is Large ribosomal subunit protein uL22 (114 aa).

The protein belongs to the universal ribosomal protein uL22 family. As to quaternary structure, part of the 50S ribosomal subunit.

Its function is as follows. This protein binds specifically to 23S rRNA; its binding is stimulated by other ribosomal proteins, e.g. L4, L17, and L20. It is important during the early stages of 50S assembly. It makes multiple contacts with different domains of the 23S rRNA in the assembled 50S subunit and ribosome. In terms of biological role, the globular domain of the protein is located near the polypeptide exit tunnel on the outside of the subunit, while an extended beta-hairpin is found that lines the wall of the exit tunnel in the center of the 70S ribosome. This chain is Large ribosomal subunit protein uL22, found in Desulfosudis oleivorans (strain DSM 6200 / JCM 39069 / Hxd3) (Desulfococcus oleovorans).